Reading from the N-terminus, the 122-residue chain is Large ribosomal subunit protein uL18 (122 aa).

The span at 1–16 (MFKKVDRKASRQKKQM) shows a compositional bias: basic residues. The disordered stretch occupies residues 1 to 29 (MFKKVDRKASRQKKQMSIRNKISGTPERP).

This sequence belongs to the universal ribosomal protein uL18 family. As to quaternary structure, part of the 50S ribosomal subunit; part of the 5S rRNA/L5/L18/L25 subcomplex. Contacts the 5S and 23S rRNAs.

Functionally, this is one of the proteins that bind and probably mediate the attachment of the 5S RNA into the large ribosomal subunit, where it forms part of the central protuberance. The polypeptide is Large ribosomal subunit protein uL18 (Fusobacterium nucleatum subsp. nucleatum (strain ATCC 25586 / DSM 15643 / BCRC 10681 / CIP 101130 / JCM 8532 / KCTC 2640 / LMG 13131 / VPI 4355)).